The primary structure comprises 400 residues: Integumentary mucin A.1 (400 aa).

The signal sequence occupies residues 1–20 (MKHIILCIHFLLMVVGLGQA). 2 P-type domains span residues 21–64 (QDCS…FYNA) and 72–115 (LECS…YART). Cystine bridges form between C23–C49, C33–C48, and C43–C60. An N-linked (GlcNAc...) asparagine glycan is attached at N63. 3 cysteine pairs are disulfide-bonded: C74–C100, C84–C99, and C94–C111. Composition is skewed to low complexity over residues 122 to 264 (PDTT…DTTP) and 272 to 299 (ETTT…ETTT). Residues 122–302 (PDTTTASTTA…TTTETTTAPP (181 aa)) form a disordered region. 14 repeat units span residues 127–135 (ASTTAETTT), 136–144 (VPTTPETTT), 145–153 (VPTTPETTT), 154–162 (VPTTPETTT), 163–171 (VPTTPETTT), 172–180 (VPTTPETTT), 181–189 (VPTTPETTT), 190–198 (VPTTPETTT), 199–207 (VPTTPETTT), 208–216 (VPTTPETTT), 217–225 (VPTTPETTT), 226–234 (VPTTPETTT), 235–243 (ASTTAETTT), and 244–252 (VPTTPETTT). Residues 127-261 (ASTTAETTTV…TEPTTTPTTD (135 aa)) are 15 X 9 AA approximate tandem repeats of [AV]-[SP]-T-T-[AP]-E-T-T-T. The 1-15; approximate repeat unit spans residues 253-261 (EPTTTPTTD). 7 consecutive repeat copies span residues 272-275 (ETTT), 276-279 (ETTT), 280-283 (ETTT), 284-287 (ETTT), 288-291 (ETTT), 292-295 (ETTT), and 296-299 (ETTT). The segment at 272-299 (ETTTETTTETTTETTTETTTETTTETTT) is 7 X 4 AA repeats of E-T-T-T. P-type domains follow at residues 298–343 (TTAP…FYTE) and 351–394 (AECT…FEKA). 5 disulfide bridges follow: C312–C327, C322–C339, C353–C379, C363–C378, and C373–C390.

Extensively O-glycosylated. Consist of about 70% carbohydrate and 30% protein. As to expression, expressed and stored exclusively in mature mucous glands of the skin.

It is found in the secreted. Could be involved in defense against microbial infections. Protects the epithelia from external environment. The protein is Integumentary mucin A.1 of Xenopus laevis (African clawed frog).